A 181-amino-acid chain; its full sequence is uncharacterized protein (181 aa).

This is an uncharacterized protein from Rickettsia prowazekii (strain Madrid E).